The chain runs to 59 residues: Dybowskin-1CDYa (59 aa).

The N-terminal stretch at 1-22 (MFTLKKSLLLLFFLGTINFSLC) is a signal peptide. Residues 23–44 (EEERNAEEERRDYPEERDVEVE) constitute a propeptide that is removed on maturation.

Belongs to the frog skin active peptide (FSAP) family. Brevinin subfamily. In terms of tissue distribution, expressed by the skin glands.

The protein resides in the secreted. Its function is as follows. Antimicrobial peptide. Has activity against the Gram-positive bacterium S.aureus (MIC=6 uM) and the Gram-negative bacterium E.coli (MIC=3 uM). Lacks hemolytic activity against human erythrocytes. The protein is Dybowskin-1CDYa of Rana dybowskii (Dybovsky's frog).